Here is a 235-residue protein sequence, read N- to C-terminus: Small ribosomal subunit protein uS3 (235 aa).

Residues 39–107 (VRKFLLGQLS…PTKLNISEIR (69 aa)) form the KH type-2 domain.

It belongs to the universal ribosomal protein uS3 family. As to quaternary structure, part of the 30S ribosomal subunit. Forms a tight complex with proteins S10 and S14.

Functionally, binds the lower part of the 30S subunit head. Binds mRNA in the 70S ribosome, positioning it for translation. In Blochmanniella floridana, this protein is Small ribosomal subunit protein uS3.